The chain runs to 568 residues: Sphingosine-1-phosphate lyase 1 (568 aa).

Residues Met1 to Gln41 lie on the Lumenal side of the membrane. A helical; Signal-anchor for type III membrane protein membrane pass occupies residues Leu42 to Gln62. Residues Pro63–Arg568 lie on the Cytoplasmic side of the membrane. Lys353 is modified (N6-(pyridoxal phosphate)lysine; alternate). The residue at position 353 (Lys353) is an N6-acetyllysine; alternate. 3'-nitrotyrosine is present on residues Tyr356 and Tyr366. Position 564 is a phosphoserine (Ser564).

This sequence belongs to the group II decarboxylase family. Sphingosine-1-phosphate lyase subfamily. In terms of assembly, homodimer. The cofactor is pyridoxal 5'-phosphate.

The protein localises to the endoplasmic reticulum membrane. It catalyses the reaction sphinganine 1-phosphate = hexadecanal + phosphoethanolamine. The enzyme catalyses sphing-4-enine 1-phosphate = (2E)-hexadecenal + phosphoethanolamine. It functions in the pathway lipid metabolism; sphingolipid metabolism. Functionally, cleaves phosphorylated sphingoid bases (PSBs), such as sphingosine-1-phosphate, into fatty aldehydes and phosphoethanolamine. Elevates stress-induced ceramide production and apoptosis. Required for global lipid homeostasis in liver and cholesterol homeostasis in fibroblasts. Involved in the regulation of pro-inflammatory response and neutrophil trafficking. Modulates neuronal autophagy via phosphoethanolamine production which regulates accumulation of aggregate-prone proteins such as APP. Seems to play a role in establishing neuronal contact sites and axonal maintenance. This chain is Sphingosine-1-phosphate lyase 1, found in Rattus norvegicus (Rat).